Reading from the N-terminus, the 441-residue chain is tRNA-2-methylthio-N(6)-dimethylallyladenosine synthase (441 aa).

One can recognise an MTTase N-terminal domain in the interval 3 to 119 (KKVSIRTFGC…LPGLIRNAFQ (117 aa)). Positions 12, 48, 82, 155, 159, and 162 each coordinate [4Fe-4S] cluster. One can recognise a Radical SAM core domain in the interval 141-371 (RSGSISAFIP…IDLQSGISGE (231 aa)). The TRAM domain maps to 374–437 (GNDVGSVQEV…QATLIGRCQD (64 aa)).

Belongs to the methylthiotransferase family. MiaB subfamily. Monomer. [4Fe-4S] cluster is required as a cofactor.

The protein resides in the cytoplasm. The enzyme catalyses N(6)-dimethylallyladenosine(37) in tRNA + (sulfur carrier)-SH + AH2 + 2 S-adenosyl-L-methionine = 2-methylsulfanyl-N(6)-dimethylallyladenosine(37) in tRNA + (sulfur carrier)-H + 5'-deoxyadenosine + L-methionine + A + S-adenosyl-L-homocysteine + 2 H(+). Catalyzes the methylthiolation of N6-(dimethylallyl)adenosine (i(6)A), leading to the formation of 2-methylthio-N6-(dimethylallyl)adenosine (ms(2)i(6)A) at position 37 in tRNAs that read codons beginning with uridine. The sequence is that of tRNA-2-methylthio-N(6)-dimethylallyladenosine synthase from Prosthecochloris aestuarii (strain DSM 271 / SK 413).